A 34-amino-acid polypeptide reads, in one-letter code: Cytochrome c oxidase polypeptide 2A (34 aa).

Position 1 is an N-formylmethionine (M1). The helical transmembrane segment at 4–34 (KPKGALAVILVLTLTILVFWLGVYAVFFARG) threads the bilayer.

The protein localises to the cell membrane. The enzyme catalyses 4 Fe(II)-[cytochrome c] + O2 + 8 H(+)(in) = 4 Fe(III)-[cytochrome c] + 2 H2O + 4 H(+)(out). The chain is Cytochrome c oxidase polypeptide 2A (cbaD) from Thermus thermophilus (strain ATCC 27634 / DSM 579 / HB8).